The sequence spans 128 residues: uncharacterized protein (128 aa).

The VOC domain maps to 1–126 (MHHIELYVSD…DRIKVELVAP (126 aa)).

This is an uncharacterized protein from Bacillus subtilis (strain 168).